We begin with the raw amino-acid sequence, 344 residues long: Anthranilate phosphoribosyltransferase (344 aa).

5-phospho-alpha-D-ribose 1-diphosphate is bound by residues glycine 86, 89–90 (GD), threonine 94, 96–99 (NIST), 114–122 (KHGNKSASG), and serine 126. Glycine 86 is a binding site for anthranilate. A Mg(2+)-binding site is contributed by serine 98. Anthranilate is bound at residue asparagine 117. Arginine 172 serves as a coordination point for anthranilate. Mg(2+)-binding residues include aspartate 231 and glutamate 232.

Belongs to the anthranilate phosphoribosyltransferase family. Homodimer. It depends on Mg(2+) as a cofactor.

It catalyses the reaction N-(5-phospho-beta-D-ribosyl)anthranilate + diphosphate = 5-phospho-alpha-D-ribose 1-diphosphate + anthranilate. It participates in amino-acid biosynthesis; L-tryptophan biosynthesis; L-tryptophan from chorismate: step 2/5. In terms of biological role, catalyzes the transfer of the phosphoribosyl group of 5-phosphorylribose-1-pyrophosphate (PRPP) to anthranilate to yield N-(5'-phosphoribosyl)-anthranilate (PRA). The protein is Anthranilate phosphoribosyltransferase of Prochlorococcus marinus (strain MIT 9215).